Reading from the N-terminus, the 393-residue chain is Elongation factor Tu (393 aa).

Residues 10 to 203 (KPHVNIGTIG…AVDSFIPDPV (194 aa)) enclose the tr-type G domain. The tract at residues 19–26 (GHVDHGKT) is G1. Residue 19–26 (GHVDHGKT) participates in GTP binding. Position 26 (Thr26) interacts with Mg(2+). The segment at 60-64 (GITIS) is G2. Positions 81–84 (DCPG) are G3. GTP is bound by residues 81–85 (DCPGH) and 136–139 (NKVD). Residues 136–139 (NKVD) are G4. A G5 region spans residues 173–175 (SAL).

Belongs to the TRAFAC class translation factor GTPase superfamily. Classic translation factor GTPase family. EF-Tu/EF-1A subfamily. As to quaternary structure, monomer.

The protein localises to the cytoplasm. It catalyses the reaction GTP + H2O = GDP + phosphate + H(+). GTP hydrolase that promotes the GTP-dependent binding of aminoacyl-tRNA to the A-site of ribosomes during protein biosynthesis. This Pelodictyon phaeoclathratiforme (strain DSM 5477 / BU-1) protein is Elongation factor Tu.